The sequence spans 308 residues: Uricase-2 isozyme 1 (308 aa).

Active-site charge relay system residues include lysine 17 and threonine 63. Positions 63, 64, 165, 182, 237, 238, and 264 each coordinate urate. Catalysis depends on histidine 266, which acts as the Charge relay system. The Microbody targeting signal signature appears at 306 to 308 (SKL).

Belongs to the uricase family.

It is found in the peroxisome. The catalysed reaction is urate + O2 + H2O = 5-hydroxyisourate + H2O2. Its pathway is purine metabolism; urate degradation; (S)-allantoin from urate: step 1/3. In terms of biological role, catalyzes the oxidation of uric acid to 5-hydroxyisourate, which is further processed to form (S)-allantoin. The chain is Uricase-2 isozyme 1 from Canavalia lineata (Beach bean).